Reading from the N-terminus, the 558-residue chain is AP2-like ethylene-responsive transcription factor AIL5 (558 aa).

Positions 1–54 are enriched in low complexity; that stretch reads MKNNNNKSSSSSSYDSSLSPSSSSSSHQNWLSFSLSNNNNNFNSSSNPNLTSST. Disordered regions lie at residues 1-65, 74-93, and 166-195; these read MKNN…PSHL, SPVERQDGSPGVSPSDATAV, and HSSEVSSVHKQQPNPLAVSEASPTPKKNVE. DNA-binding regions (AP2/ERF) lie at residues 203 to 269 and 305 to 363; these read IYRG…TNFP and MYRG…TNFD. Residues 387 to 406 form a disordered region; sequence SPATAAADKTVDLSPSDSPS.

Belongs to the AP2/ERF transcription factor family. AP2 subfamily. As to expression, expressed in roots, seedlings, inflorescence, and siliques. Also detected at low levels in leaves.

Its subcellular location is the nucleus. In terms of biological role, probably acts as a transcriptional activator. Binds to the GCC-box pathogenesis-related promoter element. May be involved in the regulation of gene expression by stress factors and by components of stress signal transduction pathways. Involved in the regulation of floral organs size. The chain is AP2-like ethylene-responsive transcription factor AIL5 from Arabidopsis thaliana (Mouse-ear cress).